Reading from the N-terminus, the 137-residue chain is Large-conductance mechanosensitive channel (137 aa).

The next 3 membrane-spanning stretches (helical) occupy residues 15–35, 38–58, and 80–100; these read IDLAIGVIIGGAFGGLVNSIV, ILMPIIGFITGGIDFSNMFIQ, and GNFITLLINFLIIAWVLFLFV.

The protein belongs to the MscL family. As to quaternary structure, homopentamer.

Its subcellular location is the cell inner membrane. Its function is as follows. Channel that opens in response to stretch forces in the membrane lipid bilayer. May participate in the regulation of osmotic pressure changes within the cell. This chain is Large-conductance mechanosensitive channel, found in Bartonella quintana (strain Toulouse) (Rochalimaea quintana).